We begin with the raw amino-acid sequence, 333 residues long: T-cell surface glycoprotein CD1c (333 aa).

A signal peptide spans 1–17 (MLFLQFLLLALLLPGGD). Over 18–302 (NADASQEHVS…ILYWGHHFSM (285 aa)) the chain is Extracellular. Residues Asn-38, Asn-70, Asn-75, and Asn-146 are each glycosylated (N-linked (GlcNAc...) asparagine). 2 cysteine pairs are disulfide-bonded: Cys-120–Cys-185 and Cys-225–Cys-280. Residues 206–296 (PEAWLSSRPS…LGGQDIILYW (91 aa)) enclose the Ig-like domain. A helical membrane pass occupies residues 303–323 (NWIALVVIVPLVILIVLVLWF). Topologically, residues 324 to 333 (KKHCSYQDIL) are cytoplasmic. The Internalization signal signature appears at 329-332 (YQDI).

Heterodimer with B2M (beta-2-microglobulin). In terms of tissue distribution, expressed on cortical thymocytes, on certain T-cell leukemias, and in various other tissues.

Its subcellular location is the cell membrane. The protein resides in the endosome membrane. It localises to the lysosome. Its function is as follows. Antigen-presenting protein that binds self and non-self lipid and glycolipid antigens and presents them to T-cell receptors on natural killer T-cells. The protein is T-cell surface glycoprotein CD1c (CD1C) of Homo sapiens (Human).